A 180-amino-acid chain; its full sequence is UPF0398 protein EF_1150 (180 aa).

The protein belongs to the UPF0398 family.

This chain is UPF0398 protein EF_1150, found in Enterococcus faecalis (strain ATCC 700802 / V583).